The following is a 445-amino-acid chain: Argininosuccinate synthase (445 aa).

Residues 17 to 25 and alanine 43 contribute to the ATP site; that span reads AFSGGLDTS. Tyrosine 99 contacts L-citrulline. Residues glycine 129 and threonine 131 each coordinate ATP. Residues threonine 131, asparagine 135, and aspartate 136 each contribute to the L-aspartate site. Asparagine 135 serves as a coordination point for L-citrulline. Aspartate 136 provides a ligand contact to ATP. L-citrulline-binding residues include arginine 139 and serine 192. Position 194 (aspartate 194) interacts with ATP. The L-citrulline site is built by threonine 201, glutamate 203, and glutamate 280.

Belongs to the argininosuccinate synthase family. Type 2 subfamily. As to quaternary structure, homotetramer.

The protein resides in the cytoplasm. The enzyme catalyses L-citrulline + L-aspartate + ATP = 2-(N(omega)-L-arginino)succinate + AMP + diphosphate + H(+). It participates in amino-acid biosynthesis; L-arginine biosynthesis; L-arginine from L-ornithine and carbamoyl phosphate: step 2/3. This is Argininosuccinate synthase from Bordetella petrii (strain ATCC BAA-461 / DSM 12804 / CCUG 43448).